Here is a 347-residue protein sequence, read N- to C-terminus: O-methyltransferase aunE (347 aa).

Trp166 is a binding site for S-adenosyl-L-methionine. His265 functions as the Proton acceptor in the catalytic mechanism.

The protein belongs to the class I-like SAM-binding methyltransferase superfamily. Cation-independent O-methyltransferase family.

It functions in the pathway secondary metabolite biosynthesis. Its function is as follows. O-methyltransferase; part of the gene cluster that mediates the biosynthesis of aurasperone B, a dimeric gamma-naphthopyrone. The first step in the biosynthesis of aurasperone B is the production of gamma-naphthopyrone precursor YWA1 by the non-reducing polyketide synthase albA, via condensation of one acetyl-CoA starter unit with 6 malonyl-CoA units. YWA1 is then methylated by aunE at position C-6 to yield foncesin which is further methylated at position C-8 by aunD to produce fonsecin B. A key enzyme in the biosynthetic pathway is the cytochrome P450 monooxygenase aunB which catalyzes the oxidative dimerization of fonsecin B to aurasperone B. AunB also catalyzes the oxidative dimerization of rubrofusarin B into aurasperone A. This chain is O-methyltransferase aunE, found in Aspergillus niger (strain ATCC 1015 / CBS 113.46 / FGSC A1144 / LSHB Ac4 / NCTC 3858a / NRRL 328 / USDA 3528.7).